The primary structure comprises 348 residues: Dihydroorotase (348 aa).

Residues H14 and H16 each contribute to the Zn(2+) site. Substrate contacts are provided by residues 16 to 18 (HLR) and N42. Zn(2+)-binding residues include K100, H137, and H175. K100 carries the N6-carboxylysine modification. Position 137 (H137) interacts with substrate. L220 contacts substrate. D248 contacts Zn(2+). Residue D248 is part of the active site. Residues H252 and A264 each coordinate substrate.

The protein belongs to the metallo-dependent hydrolases superfamily. DHOase family. Class II DHOase subfamily. As to quaternary structure, homodimer. Zn(2+) serves as cofactor.

It carries out the reaction (S)-dihydroorotate + H2O = N-carbamoyl-L-aspartate + H(+). It functions in the pathway pyrimidine metabolism; UMP biosynthesis via de novo pathway; (S)-dihydroorotate from bicarbonate: step 3/3. Catalyzes the reversible cyclization of carbamoyl aspartate to dihydroorotate. This Azotobacter vinelandii (strain DJ / ATCC BAA-1303) protein is Dihydroorotase.